The primary structure comprises 219 residues: Octanoyltransferase (219 aa).

The BPL/LPL catalytic domain maps to serine 32–asparagine 207. Substrate-binding positions include arginine 71 to histidine 78, serine 138 to glycine 140, and glycine 151 to alanine 153. Residue cysteine 169 is the Acyl-thioester intermediate of the active site.

It belongs to the LipB family.

It is found in the cytoplasm. It carries out the reaction octanoyl-[ACP] + L-lysyl-[protein] = N(6)-octanoyl-L-lysyl-[protein] + holo-[ACP] + H(+). It participates in protein modification; protein lipoylation via endogenous pathway; protein N(6)-(lipoyl)lysine from octanoyl-[acyl-carrier-protein]: step 1/2. Its function is as follows. Catalyzes the transfer of endogenously produced octanoic acid from octanoyl-acyl-carrier-protein onto the lipoyl domains of lipoate-dependent enzymes. Lipoyl-ACP can also act as a substrate although octanoyl-ACP is likely to be the physiological substrate. The chain is Octanoyltransferase from Shewanella woodyi (strain ATCC 51908 / MS32).